Consider the following 593-residue polypeptide: Methionine--tRNA ligase (593 aa).

A 'HIGH' region motif is present at residues Pro-7–His-17. Zn(2+) is bound by residues Cys-139, Cys-142, Cys-152, and Cys-155. The 'KMSKS' region motif lies at Lys-343 to Ser-347. Position 346 (Thr-346) interacts with ATP.

Belongs to the class-I aminoacyl-tRNA synthetase family. MetG type 1 subfamily. Monomer. Zn(2+) is required as a cofactor.

It localises to the cytoplasm. The catalysed reaction is tRNA(Met) + L-methionine + ATP = L-methionyl-tRNA(Met) + AMP + diphosphate. Its function is as follows. Is required not only for elongation of protein synthesis but also for the initiation of all mRNA translation through initiator tRNA(fMet) aminoacylation. This is Methionine--tRNA ligase from Saccharopolyspora erythraea (strain ATCC 11635 / DSM 40517 / JCM 4748 / NBRC 13426 / NCIMB 8594 / NRRL 2338).